Consider the following 349-residue polypeptide: Protein RecA (349 aa).

69 to 76 (GPESSGKT) is an ATP binding site.

Belongs to the RecA family.

The protein resides in the cytoplasm. In terms of biological role, can catalyze the hydrolysis of ATP in the presence of single-stranded DNA, the ATP-dependent uptake of single-stranded DNA by duplex DNA, and the ATP-dependent hybridization of homologous single-stranded DNAs. It interacts with LexA causing its activation and leading to its autocatalytic cleavage. The polypeptide is Protein RecA (Rippkaea orientalis (strain PCC 8801 / RF-1) (Cyanothece sp. (strain PCC 8801))).